We begin with the raw amino-acid sequence, 239 residues long: Probable transcriptional regulatory protein BAA_0622 (239 aa).

This sequence belongs to the TACO1 family. YeeN subfamily.

Its subcellular location is the cytoplasm. The polypeptide is Probable transcriptional regulatory protein BAA_0622 (Bacillus anthracis (strain A0248)).